A 336-amino-acid chain; its full sequence is Ribosomal RNA large subunit methyltransferase F (336 aa).

The protein belongs to the methyltransferase superfamily. METTL16/RlmF family.

It is found in the cytoplasm. The catalysed reaction is adenosine(1618) in 23S rRNA + S-adenosyl-L-methionine = N(6)-methyladenosine(1618) in 23S rRNA + S-adenosyl-L-homocysteine + H(+). Its function is as follows. Specifically methylates the adenine in position 1618 of 23S rRNA. In Yersinia pseudotuberculosis serotype I (strain IP32953), this protein is Ribosomal RNA large subunit methyltransferase F.